Here is a 157-residue protein sequence, read N- to C-terminus: Cuticle protein 19 (157 aa).

6 repeat units span residues 11 to 14 (AAPA), 18 to 21 (AAPA), 24 to 27 (AAPA), 29 to 32 (AAPA), 39 to 42 (AAPA), and 47 to 50 (AAPA). In terms of domain architecture, Chitin-binding type R&amp;R spans 56 to 127 (YPKYAFEYGV…SGPSAHPAPA (72 aa)). Repeat 7 spans residues 141 to 144 (AAPA).

Its function is as follows. Component of the cuticle of migratory locust which contains more than 100 different structural proteins. This chain is Cuticle protein 19, found in Locusta migratoria (Migratory locust).